The sequence spans 325 residues: Aspartate carbamoyltransferase catalytic subunit (325 aa).

Carbamoyl phosphate is bound by residues R64 and T65. K92 is an L-aspartate binding site. 3 residues coordinate carbamoyl phosphate: R114, H142, and Q145. Positions 176 and 230 each coordinate L-aspartate. Positions 271 and 272 each coordinate carbamoyl phosphate.

Belongs to the aspartate/ornithine carbamoyltransferase superfamily. ATCase family. In terms of assembly, heterododecamer (2C3:3R2) of six catalytic PyrB chains organized as two trimers (C3), and six regulatory PyrI chains organized as three dimers (R2).

It carries out the reaction carbamoyl phosphate + L-aspartate = N-carbamoyl-L-aspartate + phosphate + H(+). Its pathway is pyrimidine metabolism; UMP biosynthesis via de novo pathway; (S)-dihydroorotate from bicarbonate: step 2/3. In terms of biological role, catalyzes the condensation of carbamoyl phosphate and aspartate to form carbamoyl aspartate and inorganic phosphate, the committed step in the de novo pyrimidine nucleotide biosynthesis pathway. The protein is Aspartate carbamoyltransferase catalytic subunit of Nitratidesulfovibrio vulgaris (strain DSM 19637 / Miyazaki F) (Desulfovibrio vulgaris).